A 398-amino-acid chain; its full sequence is ATP-dependent RNA helicase eIF4A (398 aa).

The Q motif signature appears at 25-53; sequence DSFDSMELKPELLRGIYAYGFERPSAIQQ. The Helicase ATP-binding domain maps to 56-226; the sequence is ILPIIKGNDV…TKFMRDPVRI (171 aa). 69 to 76 provides a ligand contact to ATP; sequence AQSGTGKT. Residues 174–177 carry the DEAD box motif; it reads DEAD. Residues 237-398 form the Helicase C-terminal domain; it reads GIKQFYIAVE…EMPMNVADLI (162 aa).

This sequence belongs to the DEAD box helicase family. eIF4A subfamily. In terms of assembly, component of the eIF4F complex, which composition varies with external and internal environmental conditions. It is composed of at least eIF4A, eIF4E and eIF4G.

The protein localises to the cytoplasm. It catalyses the reaction ATP + H2O = ADP + phosphate + H(+). Functionally, ATP-dependent RNA helicase which is a subunit of the eIF4F complex involved in cap recognition and is required for mRNA binding to ribosome. In the current model of translation initiation, eIF4A unwinds RNA secondary structures in the 5'-UTR of mRNAs which is necessary to allow efficient binding of the small ribosomal subunit, and subsequent scanning for the initiator codon. This is ATP-dependent RNA helicase eIF4A (tif1) from Neosartorya fischeri (strain ATCC 1020 / DSM 3700 / CBS 544.65 / FGSC A1164 / JCM 1740 / NRRL 181 / WB 181) (Aspergillus fischerianus).